The following is a 245-amino-acid chain: Acetylglutamate kinase (245 aa).

Substrate contacts are provided by residues 41 to 42 (GG), R63, and N156.

The protein belongs to the acetylglutamate kinase family. ArgB subfamily.

It is found in the cytoplasm. It catalyses the reaction N-acetyl-L-glutamate + ATP = N-acetyl-L-glutamyl 5-phosphate + ADP. It functions in the pathway amino-acid biosynthesis; L-arginine biosynthesis; N(2)-acetyl-L-ornithine from L-glutamate: step 2/4. In terms of biological role, catalyzes the ATP-dependent phosphorylation of N-acetyl-L-glutamate. This chain is Acetylglutamate kinase, found in Staphylococcus epidermidis (strain ATCC 35984 / DSM 28319 / BCRC 17069 / CCUG 31568 / BM 3577 / RP62A).